Here is a 494-residue protein sequence, read N- to C-terminus: V-type proton ATPase subunit B (494 aa).

Residue Arg384 participates in ATP binding.

Belongs to the ATPase alpha/beta chains family. In terms of assembly, V-ATPase is a heteromultimeric enzyme made up of two complexes: the ATP-hydrolytic V1 complex and the proton translocation V0 complex. The V1 complex consists of three catalytic AB heterodimers that form a heterohexamer, three peripheral stalks each consisting of EG heterodimers, one central rotor including subunits D and F, and the regulatory subunits C and H. The proton translocation complex V0 consists of the proton transport subunit a, a ring of proteolipid subunits c9c'', rotary subunit d, subunits e and f, and the accessory subunits VhaAC45 and ATP6AP2.

In terms of biological role, non-catalytic subunit of the V1 complex of vacuolar(H+)-ATPase (V-ATPase), a multisubunit enzyme composed of a peripheral complex (V1) that hydrolyzes ATP and a membrane integral complex (V0) that translocates protons. V-ATPase is responsible for acidifying and maintaining the pH of intracellular compartments and in some cell types, is targeted to the plasma membrane, where it is responsible for acidifying the extracellular environment. Essential for the proper assembly and activity of V-ATPase. The sequence is that of V-type proton ATPase subunit B (VHA55) from Manduca sexta (Tobacco hawkmoth).